An 85-amino-acid polypeptide reads, in one-letter code: Large ribosomal subunit protein bL31B (85 aa).

This sequence belongs to the bacterial ribosomal protein bL31 family. Type B subfamily. As to quaternary structure, part of the 50S ribosomal subunit.

This chain is Large ribosomal subunit protein bL31B, found in Staphylococcus saprophyticus subsp. saprophyticus (strain ATCC 15305 / DSM 20229 / NCIMB 8711 / NCTC 7292 / S-41).